We begin with the raw amino-acid sequence, 405 residues long: MEYSEIMVRYGELSTKGKNKKDFIKQLGQNTRKALHQFDGIEVKAQHDRLHVTLNGADSTAVMDRLKGVFGIENFSPSVKVEKDIAAIKATALAMVQEIFTPGMTFKINTRRQDKQFEYDTNHLNDLLGGYILENVPGIQVKMKQPDLTLRVEVRLNGVFLSGQTIQGAGGLPVGTGGKAVMMLSGGIDSPVAAYYGMRRGVKLDMVHFFSPPYTSEQALAKAKELTARLAGYSGSIQFIQVPFTKIQETIKEKVPEGYLMTIQRRLMLRLAAAVAERRHAKGIFNGESLGQVASQTLESMAAINDVTSMPILRPLLSMDKTEIIKVAENIDTYDLSILPYEDCCTIFTPPAPKTHPDLEKSRKYEKYIDVDGLMQEALDGMIITDIHPDDNYLNQNEDVFAELL.

Residues 60 to 165 form the THUMP domain; the sequence is TAVMDRLKGV…LNGVFLSGQT (106 aa). ATP is bound by residues 183–184, 208–209, Arg265, Gly287, and Gln296; these read ML and HF.

The protein belongs to the ThiI family.

It localises to the cytoplasm. The catalysed reaction is [ThiI sulfur-carrier protein]-S-sulfanyl-L-cysteine + a uridine in tRNA + 2 reduced [2Fe-2S]-[ferredoxin] + ATP + H(+) = [ThiI sulfur-carrier protein]-L-cysteine + a 4-thiouridine in tRNA + 2 oxidized [2Fe-2S]-[ferredoxin] + AMP + diphosphate. It catalyses the reaction [ThiS sulfur-carrier protein]-C-terminal Gly-Gly-AMP + S-sulfanyl-L-cysteinyl-[cysteine desulfurase] + AH2 = [ThiS sulfur-carrier protein]-C-terminal-Gly-aminoethanethioate + L-cysteinyl-[cysteine desulfurase] + A + AMP + 2 H(+). The protein operates within cofactor biosynthesis; thiamine diphosphate biosynthesis. Functionally, catalyzes the ATP-dependent transfer of a sulfur to tRNA to produce 4-thiouridine in position 8 of tRNAs, which functions as a near-UV photosensor. Also catalyzes the transfer of sulfur to the sulfur carrier protein ThiS, forming ThiS-thiocarboxylate. This is a step in the synthesis of thiazole, in the thiamine biosynthesis pathway. The sulfur is donated as persulfide by IscS. This chain is Probable tRNA sulfurtransferase, found in Levilactobacillus brevis (strain ATCC 367 / BCRC 12310 / CIP 105137 / JCM 1170 / LMG 11437 / NCIMB 947 / NCTC 947) (Lactobacillus brevis).